Here is a 1193-residue protein sequence, read N- to C-terminus: K(+) efflux antiporter 1, chloroplastic (1193 aa).

The N-terminal 49 residues, 1–49 (MEYASTFQRPILFHGGDGASYCFPNRLISPKGISITSGDSKVHSCFRLR), are a transit peptide targeting the chloroplast. Residues 50–585 (RNVAQSGTLN…MIPHQEVNEE (536 aa)) lie on the Stromal side of the membrane. The interval 103–135 (SLGNADSNDHRIGESSESSDETEATDLKDARVE) is disordered. Residues 131–355 (DARVENDTDS…RAEKSLSISQ (225 aa)) are a coiled coil. Residue Lys-168 is modified to N6-acetyllysine; by NSI. A compositionally biased stretch (polar residues) spans 351 to 364 (LSISQTPEETQGQL). Disordered regions lie at residues 351–372 (LSISQTPEETQGQLSDEETSQE) and 421–474 (QPYE…NSPK). The segment covering 439–465 (KVVEADSEKPKINVQTKKQETQKDLPK) has biased composition (basic and acidic residues). The chain crosses the membrane as a helical span at residues 586–606 (EASLFDFLWLLLASVIFVPLF). Over 607–612 (QKIPGG) the chain is Chloroplast intermembrane. A helical transmembrane segment spans residues 613–633 (SPVLGYLAAGILIGPYGLSII). Topologically, residues 634-640 (RNVHGTR) are stromal. The chain crosses the membrane as a helical span at residues 641-661 (AIAEFGVVFLLFNIGLELSVE). Residues 662–668 (RLSSMKK) lie on the Chloroplast intermembrane side of the membrane. The helical transmembrane segment at 669 to 689 (YVFGLGSAQVLVTAAVVGLLA) threads the bilayer. The Stromal segment spans residues 690 to 698 (HYVAGQAGP). The helical transmembrane segment at 699 to 719 (AAIVIGNGLALSSTAVVLQVL) threads the bilayer. The Chloroplast intermembrane segment spans residues 720–733 (QERGESTSRHGRAS). The helical transmembrane segment at 734 to 754 (FSVLLFQDLAVVVLLILIPLI) threads the bilayer. Over 755–766 (SPNSSKGGIGFQ) the chain is Stromal. Residues 767–787 (AIAEALGLAAVKAAVAITAII) traverse the membrane as a helical segment. The Chloroplast intermembrane portion of the chain corresponds to 788–827 (AGGRLLLRPIYKQIAENRNAEIFSANTLLVILGTSLLTAR). Residues 828–848 (AGLSMALGAFLAGLLLAETEF) form a helical membrane-spanning segment. The Stromal segment spans residues 849–860 (SLQVESDIAPYR). A helical membrane pass occupies residues 861–881 (GLLLGLFFMTVGMSIDPKLLL). At 882–883 (SN) the chain is on the chloroplast intermembrane side. A helical transmembrane segment spans residues 884 to 904 (FPVIVGTLGLLIVGKTMLVVI). The Stromal segment spans residues 905–912 (MGKLFGIS). A helical membrane pass occupies residues 913 to 933 (IISAIRVGLLLAPGGEFAFVA). Residues 934–948 (FGEAVNQGIMSPQLS) are Chloroplast intermembrane-facing. The chain crosses the membrane as a helical span at residues 949-969 (SLLFLVVGISMAITPWLAAGG). Residues 970–1193 (QLIASRFELH…QIIEGGTVVI (224 aa)) lie on the Stromal side of the membrane. In terms of domain architecture, RCK N-terminal spans 995 to 1112 (QGHIIICGFG…EKAGATAVVP (118 aa)). The disordered stretch occupies residues 1165–1184 (GYSRTSKPKPQPSDASGDNQ).

It belongs to the monovalent cation:proton antiporter 2 (CPA2) transporter (TC 2.A.37) family. KEA (TC 2.A.37.1) subfamily. Post-translationally, acetylated at Lys-168 by the stromal acetyltransferase enzyme NSI. In terms of tissue distribution, expressed in shoots and roots. Mainly localized to leaf veins, hypocotyls, mesophylls and guard cells. Accumulates at high levels in small and dividing plastids (at protein level).

It localises to the plastid. It is found in the chloroplast inner membrane. It catalyses the reaction K(+)(in) + H(+)(out) = K(+)(out) + H(+)(in). Its activity is regulated as follows. Repressed by sodium ions Na(+). Electroneutral K(+)/H(+) efflux antiporter involved in chloroplastic K(+) homeostasis and osmotic adjustment, especially during plastid division and thylakoid membrane formation. Collaboratively with KEA2, adjusts alkaline stromal pH upon light to dark transitions in plastids. Together with KEA2, critical for chloroplast development, including chloroplast RNA-metabolism (e.g. rRNA maturation, polysome loading and RNA-protein interactions) and plastid gene expression (PGE), ion homeostasis, and photosynthesis. Contributes, during early seedling development, to the regulation of photosynthesis and abscisic acid- (ABA-) mediated primary root growth in a sucrose-dependent manner. Involved in the regulation of reactive oxygen and nitrogen species (ROS and RNS) metabolism. Required in roots for rapid hyperosmotic-induced Ca(2+) responses and for osmo-sensory potentiation in hyperosmotic conditions. May counteract resilience to drought and salt stress, involving photorespiratory pathway and stomata closure. This chain is K(+) efflux antiporter 1, chloroplastic, found in Arabidopsis thaliana (Mouse-ear cress).